Reading from the N-terminus, the 1369-residue chain is Serine/threonine-protein kinase SIK3 (1369 aa).

The interval leucine 26–serine 55 is disordered. The span at leucine 27–alanine 45 shows a compositional bias: pro residues. Low complexity predominate over residues valine 46–serine 55. Residues tyrosine 66–methionine 317 form the Protein kinase domain. Residue threonine 71 is modified to Phosphothreonine. ATP-binding positions include isoleucine 72–valine 80 and lysine 95. Aspartate 188 functions as the Proton acceptor in the catalytic mechanism. At threonine 221 the chain carries Phosphothreonine. One can recognise a UBA domain in the interval proline 344–aspartate 384. The residue at position 469 (threonine 469) is a Phosphothreonine. Phosphoserine occurs at positions 551, 591, 592, 674, and 695. Residues isoleucine 775–serine 821 form a disordered region. Positions alanine 803 to glycine 818 are enriched in polar residues. Serine 914 is subject to Phosphoserine. Residues leucine 942–serine 993 form a disordered region. Over residues serine 944–serine 957 the composition is skewed to low complexity. Over residues proline 981 to serine 993 the composition is skewed to polar residues. Position 1026 is a phosphoserine (serine 1026). Position 1034 is an omega-N-methylarginine (arginine 1034). The interval aspartate 1314 to leucine 1338 is disordered.

This sequence belongs to the protein kinase superfamily. CAMK Ser/Thr protein kinase family. SNF1 subfamily. Binds to and is activated by YWHAZ when phosphorylated on Thr-221. Interacts with 14-3-3 proteins. Interacts with HDAC4; this interaction leads to HDAC4 retention in the cytoplasm. Interacts with DEPTOR, MLST8/GbetaL, RICTOR and RPTOR. Mg(2+) serves as cofactor. Phosphorylated at Thr-221 by STK11/LKB1 in complex with STE20-related adapter-alpha (STRADA) pseudo kinase and CAB39. Expressed in hypertrophic chondrocytes in the growth plate.

The protein localises to the cytoplasm. The enzyme catalyses L-seryl-[protein] + ATP = O-phospho-L-seryl-[protein] + ADP + H(+). The catalysed reaction is L-threonyl-[protein] + ATP = O-phospho-L-threonyl-[protein] + ADP + H(+). Its activity is regulated as follows. Activated by phosphorylation on Thr-221. In terms of biological role, positive regulator of mTOR signaling that functions by triggering the degradation of DEPTOR, an mTOR inhibitor. Required for chondrocyte hypertrophy during skeletogenesis. Negatively regulates cAMP signaling pathway possibly by acting on CRTC2/TORC2 and CRTC3/TORC3. Prevents HDAC4 translocation to the nucleus. The protein is Serine/threonine-protein kinase SIK3 (Sik3) of Mus musculus (Mouse).